A 181-amino-acid chain; its full sequence is ATP synthase subunit delta (181 aa).

Belongs to the ATPase delta chain family. F-type ATPases have 2 components, F(1) - the catalytic core - and F(0) - the membrane proton channel. F(1) has five subunits: alpha(3), beta(3), gamma(1), delta(1), epsilon(1). F(0) has three main subunits: a(1), b(2) and c(10-14). The alpha and beta chains form an alternating ring which encloses part of the gamma chain. F(1) is attached to F(0) by a central stalk formed by the gamma and epsilon chains, while a peripheral stalk is formed by the delta and b chains.

It localises to the cell membrane. F(1)F(0) ATP synthase produces ATP from ADP in the presence of a proton or sodium gradient. F-type ATPases consist of two structural domains, F(1) containing the extramembraneous catalytic core and F(0) containing the membrane proton channel, linked together by a central stalk and a peripheral stalk. During catalysis, ATP synthesis in the catalytic domain of F(1) is coupled via a rotary mechanism of the central stalk subunits to proton translocation. Its function is as follows. This protein is part of the stalk that links CF(0) to CF(1). It either transmits conformational changes from CF(0) to CF(1) or is implicated in proton conduction. The polypeptide is ATP synthase subunit delta (Priestia megaterium (strain ATCC 12872 / QMB1551) (Bacillus megaterium)).